Here is a 584-residue protein sequence, read N- to C-terminus: Peroxynitrite isomerase THAP4 (584 aa).

The segment at 1–85 (MVICCAAANC…LKPTAVPSIF (85 aa)) adopts a THAP-type zinc-finger fold. Residues 84 to 330 (IFHLAEKKRR…EAVQSEHSDA (247 aa)) are disordered. Residues 89 to 104 (EKKRRAGGHGRPRRRD) are compositionally biased toward basic residues. Residues 122–138 (GKAAAGSPSSSSASPMA) are compositionally biased toward low complexity. The segment covering 158 to 178 (AARETAGQERGRQPLEGRAED) has biased composition (basic and acidic residues). A compositionally biased stretch (low complexity) spans 190–208 (GEAGTGAEDAGEEGATPAD). Residues 236–239 (LHSY) carry the HCFC1-binding motif (HBM) motif. Serine 240 is subject to Phosphoserine. Over residues 248–267 (ERPAVPREPVERKRLRRDAE) the composition is skewed to basic and acidic residues. Residues 422–584 (PPKMSPVVEP…LHVTYKKVTP (163 aa)) are nitrobindin. Residues threonine 451 and histidine 574 each contribute to the heme b site.

This sequence in the C-terminal section; belongs to the nitrobindin family. As to quaternary structure, homodimer. Heme b serves as cofactor.

The protein resides in the cytoplasm. The protein localises to the nucleus. It carries out the reaction peroxynitrite = nitrate. It functions in the pathway nitrogen metabolism. Heme-binding protein able to scavenge peroxynitrite and to protect free L-tyrosine against peroxynitrite-mediated nitration, by acting as a peroxynitrite isomerase that converts peroxynitrite to nitrate. Therefore, this protein likely plays a role in peroxynitrite sensing and in the detoxification of reactive nitrogen and oxygen species (RNS and ROS, respectively). Is able to bind nitric oxide (NO) in vitro, but may act as a sensor of peroxynitrite levels in vivo, possibly modulating the transcriptional activity residing in the N-terminal region. This Bos taurus (Bovine) protein is Peroxynitrite isomerase THAP4.